The primary structure comprises 293 residues: MNAFDTDITEHADSSGCHPLFRDVPATVEFNKLRKRLLRLTRQAIEDFAMVKPGDRWMVCLSGGKDSYGLLALLLDLKWRGLLPVELLAVNLDQGQPNFPKHILPDFLTRYGIEHRIEYQDTYSIVTDKLPETSTYCSLCSRLRRGNLYRIAREEGCSAIVLGHHREDILETFFMNLFHGGRLAAMPPKLLNDEGDLMVFRPLAYAAEDDLEKFANAMQFPIIPCDLCGSQDGLQRNAMKAMLIDIEKRMPGRKDTMIRALTNVRPSHLLDRKLFDFAGLMANGEKGSDDALW.

The PP-loop motif motif lies at 62 to 67 (SGGKDS). [4Fe-4S] cluster contacts are provided by cysteine 137, cysteine 140, and cysteine 228.

It belongs to the TtcA family. As to quaternary structure, homodimer. Requires Mg(2+) as cofactor. It depends on [4Fe-4S] cluster as a cofactor.

Its subcellular location is the cytoplasm. It catalyses the reaction cytidine(32) in tRNA + S-sulfanyl-L-cysteinyl-[cysteine desulfurase] + AH2 + ATP = 2-thiocytidine(32) in tRNA + L-cysteinyl-[cysteine desulfurase] + A + AMP + diphosphate + H(+). It functions in the pathway tRNA modification. In terms of biological role, catalyzes the ATP-dependent 2-thiolation of cytidine in position 32 of tRNA, to form 2-thiocytidine (s(2)C32). The sulfur atoms are provided by the cysteine/cysteine desulfurase (IscS) system. In Brucella suis (strain ATCC 23445 / NCTC 10510), this protein is tRNA-cytidine(32) 2-sulfurtransferase.